The sequence spans 904 residues: Myelin regulatory factor-like protein (904 aa).

A disordered region spans residues 46 to 132 (LQRQLPDTPP…ATCRHQTGPS (87 aa)). Over residues 100 to 117 (PSQSMAGQTHSSFQNGYP) the composition is skewed to polar residues. The segment at residues 108-400 (THSSFQNGYP…SNPGQFENDS (293 aa)) is a DNA-binding region (NDT80). Residues 446–554 (SDSRVKENIQ…KLTNNLEERI (109 aa)) enclose the Peptidase S74 domain. Positions 538–575 (GAVKQLCKLTNNLEERIEELEIWNKKLARLKRLSSSWK) form a coiled coil. The chain crosses the membrane as a helical span at residues 624–644 (LVVVLIAVMAFCALTIVALYI). Residues 656–688 (NLPLSNMTSSPEPALSSTAPTSAPHTTPETTQT) form a disordered region. Over residues 663 to 688 (TSSPEPALSSTAPTSAPHTTPETTQT) the composition is skewed to low complexity.

It belongs to the MRF family.

The protein localises to the membrane. The protein is Myelin regulatory factor-like protein (Myrfl) of Mus musculus (Mouse).